A 39-amino-acid chain; its full sequence is Large ribosomal subunit protein bL36 (39 aa).

This sequence belongs to the bacterial ribosomal protein bL36 family.

The chain is Large ribosomal subunit protein bL36 from Limosilactobacillus reuteri (strain DSM 20016) (Lactobacillus reuteri).